Consider the following 213-residue polypeptide: Large ribosomal subunit protein uL1 (213 aa).

This sequence belongs to the universal ribosomal protein uL1 family. In terms of assembly, part of the 50S ribosomal subunit.

Its function is as follows. Binds directly to 23S rRNA. Probably involved in E site tRNA release. In terms of biological role, protein L1 is also a translational repressor protein, it controls the translation of its operon by binding to its mRNA. The sequence is that of Large ribosomal subunit protein uL1 from Nanoarchaeum equitans (strain Kin4-M).